A 181-amino-acid chain; its full sequence is Large ribosomal subunit protein uL5 (181 aa).

This sequence belongs to the universal ribosomal protein uL5 family. As to quaternary structure, part of the 50S ribosomal subunit; part of the 5S rRNA/L5/L18/L25 subcomplex. Contacts the 5S rRNA and the P site tRNA. Forms a bridge to the 30S subunit in the 70S ribosome.

Functionally, this is one of the proteins that bind and probably mediate the attachment of the 5S RNA into the large ribosomal subunit, where it forms part of the central protuberance. In the 70S ribosome it contacts protein S13 of the 30S subunit (bridge B1b), connecting the 2 subunits; this bridge is implicated in subunit movement. Contacts the P site tRNA; the 5S rRNA and some of its associated proteins might help stabilize positioning of ribosome-bound tRNAs. The chain is Large ribosomal subunit protein uL5 from Sulfurimonas denitrificans (strain ATCC 33889 / DSM 1251) (Thiomicrospira denitrificans (strain ATCC 33889 / DSM 1251)).